Consider the following 91-residue polypeptide: UPF0358 protein SSP1677 (91 aa).

It belongs to the UPF0358 family.

The protein is UPF0358 protein SSP1677 of Staphylococcus saprophyticus subsp. saprophyticus (strain ATCC 15305 / DSM 20229 / NCIMB 8711 / NCTC 7292 / S-41).